The sequence spans 410 residues: 2-oxoglutarate-dependent dioxygenase AOP3 (410 aa).

A Fe2OG dioxygenase domain is found at 258 to 355 (GNASVGAKEA…RYAAALFSYP (98 aa)). Residues histidine 278, aspartate 280, and histidine 335 each coordinate Fe cation. Arginine 346 serves as a coordination point for 2-oxoglutarate.

The protein belongs to the iron/ascorbate-dependent oxidoreductase family. Requires Fe(2+) as cofactor.

In terms of biological role, 2-oxoglutarate-dependent dioxygenase involved in glucosinolates biosynthesis. Catalyzes the conversion of methylsulfinylalkyl glucosinolates to hydroxyalkyl glucosinolates. This is 2-oxoglutarate-dependent dioxygenase AOP3 (AOP3) from Arabidopsis thaliana (Mouse-ear cress).